A 435-amino-acid chain; its full sequence is Enolase (435 aa).

Gln-167 serves as a coordination point for (2R)-2-phosphoglycerate. Glu-209 (proton donor) is an active-site residue. The Mg(2+) site is built by Asp-246, Glu-292, and Asp-319. The (2R)-2-phosphoglycerate site is built by Lys-344, Arg-373, Ser-374, and Lys-395. Catalysis depends on Lys-344, which acts as the Proton acceptor.

Belongs to the enolase family. Mg(2+) serves as cofactor.

The protein localises to the cytoplasm. It localises to the secreted. Its subcellular location is the cell surface. The enzyme catalyses (2R)-2-phosphoglycerate = phosphoenolpyruvate + H2O. It functions in the pathway carbohydrate degradation; glycolysis; pyruvate from D-glyceraldehyde 3-phosphate: step 4/5. Catalyzes the reversible conversion of 2-phosphoglycerate (2-PG) into phosphoenolpyruvate (PEP). It is essential for the degradation of carbohydrates via glycolysis. The chain is Enolase from Lachnospira eligens (strain ATCC 27750 / DSM 3376 / VPI C15-48 / C15-B4) (Eubacterium eligens).